The primary structure comprises 320 residues: HPr kinase/phosphorylase (320 aa).

Active-site residues include H139 and K160. 154–161 is an ATP binding site; that stretch reads GDSGVGKS. S161 contributes to the Mg(2+) binding site. The active-site Proton acceptor; for phosphorylation activity. Proton donor; for dephosphorylation activity is D178. The important for the catalytic mechanism of both phosphorylation and dephosphorylation stretch occupies residues 202 to 211; it reads MEIRGIGIID. Position 203 (E203) interacts with Mg(2+). R244 is a catalytic residue. Residues 265-270 are important for the catalytic mechanism of dephosphorylation; sequence PVKTGR.

This sequence belongs to the HPrK/P family. Homohexamer. Mg(2+) serves as cofactor.

It catalyses the reaction [HPr protein]-L-serine + ATP = [HPr protein]-O-phospho-L-serine + ADP + H(+). The catalysed reaction is [HPr protein]-O-phospho-L-serine + phosphate + H(+) = [HPr protein]-L-serine + diphosphate. Catalyzes the ATP- as well as the pyrophosphate-dependent phosphorylation of a specific serine residue in HPr, a phosphocarrier protein of the phosphoenolpyruvate-dependent sugar phosphotransferase system (PTS). HprK/P also catalyzes the pyrophosphate-producing, inorganic phosphate-dependent dephosphorylation (phosphorolysis) of seryl-phosphorylated HPr (P-Ser-HPr). The two antagonistic activities of HprK/P are regulated by several intracellular metabolites, which change their concentration in response to the absence or presence of rapidly metabolisable carbon sources (glucose, fructose, etc.) in the growth medium. Therefore, by controlling the phosphorylation state of HPr, HPrK/P is a sensor enzyme that plays a major role in the regulation of carbon metabolism and sugar transport: it mediates carbon catabolite repression (CCR), and regulates PTS-catalyzed carbohydrate uptake and inducer exclusion. The sequence is that of HPr kinase/phosphorylase from Limosilactobacillus reuteri (strain DSM 20016) (Lactobacillus reuteri).